Reading from the N-terminus, the 87-residue chain is Small ribosomal subunit protein eS21 (87 aa).

The protein belongs to the eukaryotic ribosomal protein eS21 family. Component of the small ribosomal subunit (SSU). Mature N.crassa ribosomes consist of a small (40S) and a large (60S) subunit. The 40S small subunit contains 1 molecule of ribosomal RNA (18S rRNA) and at least 32 different proteins. The large 60S subunit contains 3 rRNA molecules (26S, 5.8S and 5S rRNA) and at least 42 different proteins.

Its subcellular location is the cytoplasm. Its function is as follows. Component of the ribosome, a large ribonucleoprotein complex responsible for the synthesis of proteins in the cell. The small ribosomal subunit (SSU) binds messenger RNAs (mRNAs) and translates the encoded message by selecting cognate aminoacyl-transfer RNA (tRNA) molecules. The large subunit (LSU) contains the ribosomal catalytic site termed the peptidyl transferase center (PTC), which catalyzes the formation of peptide bonds, thereby polymerizing the amino acids delivered by tRNAs into a polypeptide chain. The nascent polypeptides leave the ribosome through a tunnel in the LSU and interact with protein factors that function in enzymatic processing, targeting, and the membrane insertion of nascent chains at the exit of the ribosomal tunnel. This chain is Small ribosomal subunit protein eS21 (crp-7), found in Neurospora crassa (strain ATCC 24698 / 74-OR23-1A / CBS 708.71 / DSM 1257 / FGSC 987).